The following is a 202-amino-acid chain: dTTP/UTP pyrophosphatase (202 aa).

Aspartate 76 acts as the Proton acceptor in catalysis.

The protein belongs to the Maf family. YhdE subfamily. Requires a divalent metal cation as cofactor.

It is found in the cytoplasm. The enzyme catalyses dTTP + H2O = dTMP + diphosphate + H(+). The catalysed reaction is UTP + H2O = UMP + diphosphate + H(+). Nucleoside triphosphate pyrophosphatase that hydrolyzes dTTP and UTP. May have a dual role in cell division arrest and in preventing the incorporation of modified nucleotides into cellular nucleic acids. This is dTTP/UTP pyrophosphatase from Neisseria meningitidis serogroup B (strain ATCC BAA-335 / MC58).